We begin with the raw amino-acid sequence, 269 residues long: Small ribosomal subunit protein eS1 (269 aa).

A disordered region spans residues 1-20 (MAVGKNKGVSKGGKKGSKKK).

It belongs to the eukaryotic ribosomal protein eS1 family. As to quaternary structure, component of the small ribosomal subunit. Mature ribosomes consist of a small (40S) and a large (60S) subunit. The 40S subunit contains about 33 different proteins and 1 molecule of RNA (18S). The 60S subunit contains about 49 different proteins and 3 molecules of RNA (28S, 5.8S and 5S).

The protein resides in the cytoplasm. Has an essential role in oogenesis. This is Small ribosomal subunit protein eS1 from Anopheles gambiae (African malaria mosquito).